A 1195-amino-acid polypeptide reads, in one-letter code: Phosphatidylinositol-3,5-bisphosphate 3-phosphatase MTMR4 (1195 aa).

Residue Ser-8 is modified to Phosphoserine. In terms of domain architecture, Myotubularin phosphatase spans 153–570 (EHIRCRQEAE…RALHLWTAVY (418 aa)). A 1,2-diacyl-sn-glycero-3-phospho-(1D-myo-inositol-3,5-bisphosphate) is bound by residues Asn-320, Asn-345, and Ile-346. A 1,2-diacyl-sn-glycero-3-phospho-(1D-myo-inositol-3-phosphate) is bound by residues Asn-320, Asn-345, and Ile-346. Cys-407 (phosphocysteine intermediate) is an active-site residue. A 1,2-diacyl-sn-glycero-3-phospho-(1D-myo-inositol-3,5-bisphosphate)-binding residues include Ser-408, Asp-409, Gly-410, Trp-411, Asp-412, Arg-413, Lys-449, and Arg-453. Ser-408, Asp-409, Gly-410, Trp-411, Asp-412, and Arg-413 together coordinate a 1,2-diacyl-sn-glycero-3-phospho-(1D-myo-inositol-3-phosphate). Arg-453 contacts a 1,2-diacyl-sn-glycero-3-phospho-(1D-myo-inositol-3-phosphate). Ser-610 and Ser-629 each carry phosphoserine. Disordered regions lie at residues 645–756 (EPWH…EHCP), 780–800 (ESSQNSPTGTPQQAQPDSMLG), and 827–877 (DPST…LLEN). Over residues 720–729 (PEIKVLEETK) the composition is skewed to basic and acidic residues. 2 stretches are compositionally biased toward polar residues: residues 780–795 (ESSQNSPTGTPQQAQP) and 831–854 (DFLNQDPSGSVASISHQEQLSSVP). The PY-motif; substrate motif for NEDD4 signature appears at 1004–1008 (VPPLY). Residues 1023–1055 (HRLRQIEAGYKQEVEQLRRQVRELQMRLDIRHC) adopt a coiled-coil conformation. The FYVE-type zinc finger occupies 1114–1174 (DHMASHCYNC…VCNSCYEHIQ (61 aa)). Cys-1120, Cys-1123, Cys-1136, Cys-1139, Cys-1144, Cys-1147, Cys-1166, and Cys-1169 together coordinate Zn(2+).

The protein belongs to the protein-tyrosine phosphatase family. Non-receptor class myotubularin subfamily. Homooligomeric. Forms MTMR3:MTMR4 heterooligomers; regulates the localization of both proteins. The MTMR3:MTMR4 heterooligomer can also recruit both CEP55 and PLK1; occurs during early mitosis, regulates the phosphorylation of CEP55 by PLK1 and its recruitment to the midbody where it can mediate cell abscission. Interacts with SMAD2 and SMAD3; negatively regulates TGF-beta signaling through SMAD2 and SMAD3 dephosphorylation and retention in endosomes. Interacts with SMAD1; negatively regulates BMP signaling through SMAD1 dephosphorylation and retention in endosomes. Post-translationally, ubiquitinated. Ubiquitination by NEDD4 probably leads to proteasomal degradation. In terms of processing, phosphorylated by CDK1 during mitosis. As to expression, expressed in brain, heart, kidney, spleen, liver, colon, testis, muscle, placenta, thyroid gland, pancreas, ovary, prostate, skin, peripheral blood, and bone marrow.

The protein localises to the early endosome membrane. The protein resides in the recycling endosome membrane. It localises to the late endosome membrane. It is found in the cytoplasmic vesicle. Its subcellular location is the phagosome membrane. It catalyses the reaction a 1,2-diacyl-sn-glycero-3-phospho-(1D-myo-inositol-3-phosphate) + H2O = a 1,2-diacyl-sn-glycero-3-phospho-(1D-myo-inositol) + phosphate. The catalysed reaction is a 1,2-diacyl-sn-glycero-3-phospho-(1D-myo-inositol-3,5-bisphosphate) + H2O = a 1,2-diacyl-sn-glycero-3-phospho-(1D-myo-inositol-5-phosphate) + phosphate. The enzyme catalyses 1,2-dioctanoyl-sn-glycero-3-phospho-(1-D-myo-inositol-3-phosphate) + H2O = 1,2-dioctanoyl-sn-glycero-3-phospho-(1D-myo-inositol) + phosphate. It carries out the reaction 1,2-dioctanoyl-sn-glycero-3-phospho-(1D-myo-inositol-3,5-bisphosphate) + H2O = 1,2-dioctanoyl-sn-glycero-3-phospho-(1D-myo-inositol-5-phosphate) + phosphate. The phosphatidylinositol-3-phosphate phosphatase activity is inhibited by vanadate. Functionally, lipid phosphatase that specifically dephosphorylates the D-3 position of phosphatidylinositol 3-phosphate and phosphatidylinositol 3,5-bisphosphate, generating phosphatidylinositol and phosphatidylinositol 5-phosphate. Decreases the levels of phosphatidylinositol 3-phosphate, a phospholipid found in cell membranes where it acts as key regulator of both cell signaling and intracellular membrane traffic, in a subset of endosomal membranes to negatively regulate both endocytic recycling and trafficking and/or maturation of endosomes toward lysosomes. Through phosphatidylinositol 3-phosphate turnover in phagosome membranes regulates phagocytosis and phagosome maturation. By decreasing phosphatidylinositol 3-monophosphate (PI3P) levels in immune cells it can also regulate the innate immune response. Beside its lipid phosphatase activity, can also function as a molecular adapter to regulate midbody abscission during mitotic cytokinesis. Can also negatively regulate TGF-beta and BMP signaling through Smad proteins dephosphorylation and retention in endosomes. In Homo sapiens (Human), this protein is Phosphatidylinositol-3,5-bisphosphate 3-phosphatase MTMR4.